The following is an 838-amino-acid chain: Axin-2 (838 aa).

Residues 1–75 (MSSAVLVTLL…EGRASPDSPL (75 aa)) are disordered. The Tankyrase-binding motif motif lies at 21–30 (APRPPVPGEE). Residues 42-55 (KVQSTKPMPVSSNA) are compositionally biased toward polar residues. Residues 56–69 (RRNEDGLGEPEGRA) are compositionally biased toward basic and acidic residues. An RGS domain is found at 81-200 (SLHSLLGDQD…LTSDIYLEYV (120 aa)). Disordered stretches follow at residues 300–333 (SELS…KKQL), 398–435 (IRED…EEDP), 450–483 (PGCQ…LLPT), 568–682 (GSRG…AMPP), and 712–744 (VASQ…DHKE). Low complexity predominate over residues 303–318 (SSDALTDDSMSMTDSS). The interaction with GSK3B stretch occupies residues 327–413 (MGSKKQLQRE…KEGSEQALSS (87 aa)). Positions 413–476 (SRDGAPVQHP…PDHHHHHHQQ (64 aa)) are interaction with beta-catenin. Positions 727–737 (AGPTSFSNPSL) are enriched in polar residues. Residues 756-838 (ASELIVTYFF…RILGKVERID (83 aa)) enclose the DIX domain.

In terms of assembly, interacts with SMAD7 and RNF111. Interacts with ANKRD6. Interacts with glycogen synthase kinase-3 beta (GSK3B) and beta-catenin. The interaction between axin and beta-catenin occurs via the armadillo repeats contained in beta-catenin. Interacts with SIAH1. Interacts with SIAH2. ADP-ribosylated by tankyrase TNKS and TNKS2. Poly-ADP-ribosylated protein is recognized by RNF146, followed by ubiquitination and subsequent activation of the Wnt signaling pathway. In terms of processing, ubiquitinated by RNF146 when poly-ADP-ribosylated, leading to its degradation and subsequent activation of the Wnt signaling pathway. Deubiquitinated by USP34, deubiquitinated downstream of beta-catenin stabilization step: deubiquitination is important Wnt signaling to positively regulate beta-catenin (CTNBB1)-mediated transcription. Post-translationally, probably phosphorylated by GSK3B and dephosphorylated by PP2A. Expressed in lung and thymus.

The protein localises to the cytoplasm. In terms of biological role, inhibitor of the Wnt signaling pathway. Down-regulates beta-catenin. Probably facilitate the phosphorylation of beta-catenin and APC by GSK3B. In Rattus norvegicus (Rat), this protein is Axin-2 (Axin2).